A 782-amino-acid polypeptide reads, in one-letter code: Translation initiation factor IF-2 (782 aa).

Residues Met-1–Lys-14 are compositionally biased toward basic and acidic residues. 2 disordered regions span residues Met-1–Tyr-106 and Ser-132–Glu-174. A compositionally biased stretch (basic residues) spans Ile-15 to Val-25. Over residues Asn-31 to Thr-43 the composition is skewed to polar residues. Residues Asp-44 to Arg-61 are compositionally biased toward basic and acidic residues. Polar residues-rich tracts occupy residues Gly-86 to Tyr-106 and Ile-133 to Ser-142. A compositionally biased stretch (basic and acidic residues) spans Glu-143 to Gln-159. The tr-type G domain occupies Glu-280–Ser-453. Positions Gly-289 to Thr-296 are G1. Residue Gly-289–Thr-296 coordinates GTP. Residues Gly-314–His-318 are G2. Residues Asp-335–Gly-338 are G3. GTP-binding positions include Asp-335–His-339 and Asn-389–Asp-392. Positions Asn-389–Asp-392 are G4. A G5 region spans residues Ser-425–Leu-427.

Belongs to the TRAFAC class translation factor GTPase superfamily. Classic translation factor GTPase family. IF-2 subfamily.

Its subcellular location is the cytoplasm. Its function is as follows. One of the essential components for the initiation of protein synthesis. Protects formylmethionyl-tRNA from spontaneous hydrolysis and promotes its binding to the 30S ribosomal subunits. Also involved in the hydrolysis of GTP during the formation of the 70S ribosomal complex. In Borreliella afzelii (strain PKo) (Borrelia afzelii), this protein is Translation initiation factor IF-2.